Here is a 264-residue protein sequence, read N- to C-terminus: Thymidylate synthase (264 aa).

Arg-21 lines the dUMP pocket. Position 51 (His-51) interacts with (6R)-5,10-methylene-5,6,7,8-tetrahydrofolate. Position 126-127 (126-127 (RR)) interacts with dUMP. Cys-146 (nucleophile) is an active-site residue. DUMP contacts are provided by residues 166–169 (RSAD), Asn-177, and 207–209 (HIY). Asp-169 is a binding site for (6R)-5,10-methylene-5,6,7,8-tetrahydrofolate. Ala-263 serves as a coordination point for (6R)-5,10-methylene-5,6,7,8-tetrahydrofolate.

It belongs to the thymidylate synthase family. Bacterial-type ThyA subfamily. As to quaternary structure, homodimer.

It localises to the cytoplasm. It catalyses the reaction dUMP + (6R)-5,10-methylene-5,6,7,8-tetrahydrofolate = 7,8-dihydrofolate + dTMP. It participates in pyrimidine metabolism; dTTP biosynthesis. Catalyzes the reductive methylation of 2'-deoxyuridine-5'-monophosphate (dUMP) to 2'-deoxythymidine-5'-monophosphate (dTMP) while utilizing 5,10-methylenetetrahydrofolate (mTHF) as the methyl donor and reductant in the reaction, yielding dihydrofolate (DHF) as a by-product. This enzymatic reaction provides an intracellular de novo source of dTMP, an essential precursor for DNA biosynthesis. This chain is Thymidylate synthase, found in Agrobacterium fabrum (strain C58 / ATCC 33970) (Agrobacterium tumefaciens (strain C58)).